A 368-amino-acid chain; its full sequence is Probable magnesium transporter (368 aa).

The Extracellular portion of the chain corresponds to methionine 1 to lysine 4. A helical membrane pass occupies residues tyrosine 5–threonine 25. The Cytoplasmic segment spans residues lysine 26–asparagine 50. A helical transmembrane segment spans residues proline 51–tyrosine 71. Residues threonine 72–alanine 76 are Extracellular-facing. A helical transmembrane segment spans residues isoleucine 77 to phenylalanine 97. The Cytoplasmic portion of the chain corresponds to leucine 98 to arginine 101. The chain crosses the membrane as a helical span at residues leucine 102 to leucine 122. Residues histidine 123–proline 143 lie on the Extracellular side of the membrane. The helical transmembrane segment at glycine 144–valine 164 threads the bilayer. The Cytoplasmic segment spans residues proline 165 to tyrosine 175. A helical membrane pass occupies residues leucine 176–alanine 196. At leucine 197–glutamine 206 the chain is on the extracellular side. Residues phenylalanine 207 to methionine 227 traverse the membrane as a helical segment. At asparagine 228–serine 240 the chain is on the cytoplasmic side. The helical transmembrane segment at isoleucine 241–leucine 261 threads the bilayer. At phenylalanine 262–serine 269 the chain is on the extracellular side. An N-linked (GlcNAc...) asparagine glycan is attached at asparagine 266. The chain crosses the membrane as a helical span at residues alanine 270–leucine 290. Topologically, residues asparagine 291–histidine 368 are cytoplasmic.

The protein belongs to the NIPA family.

Its subcellular location is the cell membrane. The protein resides in the early endosome. The catalysed reaction is Mg(2+)(in) = Mg(2+)(out). Probably acts as a selective Mg(2+) transporter. Plays a role in cell wall integrity and in engulfment by host macrophages. The protein is Probable magnesium transporter of Candida albicans (strain SC5314 / ATCC MYA-2876) (Yeast).